A 1374-amino-acid chain; its full sequence is L-2-aminoadipate reductase large subunit (1374 aa).

The region spanning 828–905 (SEFNQQEREI…AFAAEVSRLK (78 aa)) is the Carrier domain. S865 bears the O-(pantetheine 4'-phosphoryl)serine mark.

This sequence belongs to the ATP-dependent AMP-binding enzyme family. As to quaternary structure, heterodimer of an alpha and a beta subunit. Pantetheine 4'-phosphate is required as a cofactor.

The enzyme catalyses (S)-2-amino-6-oxohexanoate + NADP(+) + H2O = L-2-aminoadipate + NADPH + 2 H(+). It catalyses the reaction (S)-2-amino-6-oxohexanoate + NAD(+) + H2O = L-2-aminoadipate + NADH + 2 H(+). The catalysed reaction is (S)-2-amino-6-oxohexanoate + AMP + diphosphate + NADP(+) = L-2-aminoadipate + ATP + NADPH + H(+). The protein operates within amino-acid biosynthesis; L-lysine biosynthesis via AAA pathway; L-lysine from L-alpha-aminoadipate (fungal route): step 1/3. In terms of biological role, catalyzes the activation of alpha-aminoadipate by ATP-dependent adenylation and the reduction of activated alpha-aminoadipate by NADPH. The activated alpha-aminoadipate is bound to the phosphopantheinyl group of the enzyme itself before it is reduced to (S)-2-amino-6-oxohexanoate. The protein is L-2-aminoadipate reductase large subunit (LYS2) of Candida glabrata (strain ATCC 2001 / BCRC 20586 / JCM 3761 / NBRC 0622 / NRRL Y-65 / CBS 138) (Yeast).